Reading from the N-terminus, the 183-residue chain is Globin-like protein 26 (183 aa).

Residues 1-25 are disordered; that stretch reads MGSSTSTPAPPPKKNKPEGRKADNQ. Glycine 2 carries the N-myristoyl glycine lipid modification. The short motif at 12 to 18 is the Nuclear localization signal element; it reads PKKNKPE. The Globin domain maps to 26-166; the sequence is ILNSYQKSIV…VVDQLRFGYS (141 aa). Residues histidine 77 and histidine 109 each coordinate heme.

The protein belongs to the globin family. In terms of assembly, homodimer. Occurs in an equilibrium of monomeric and dimeric forms in solution. In terms of tissue distribution, detected in the head mesodermal cell. In the tail region, detected in the stomatointestinal and anal depressor muscle cells.

Its subcellular location is the cytoplasm. It is found in the nucleus lamina. The protein resides in the cell membrane. Its function is as follows. Plays a role in electron transport. Utilizes the bis-histidyl hexacoordinated complex with iron to transfer electrons to cytochrome c and molecular oxygen. Plays a regulatory role in the periodicity of the defecation cycle under oxidative stress conditions. Not involved in imparting protection against general conditions of oxidative stress. May participate in redox reactions under anaerobic conditions. This chain is Globin-like protein 26, found in Caenorhabditis elegans.